The sequence spans 341 residues: Putative UPF0607 protein ENSP00000383783 (341 aa).

The span at 75-101 (EVRAEEPKEATEVKDQVETQGQEDNKR) shows a compositional bias: basic and acidic residues. 2 disordered regions span residues 75 to 115 (EVRA…TSSL) and 216 to 278 (GLLM…PPPA). Over residues 234–245 (SSRSSPSRAASH) the composition is skewed to low complexity.

The protein belongs to the UPF0607 family.

This is Putative UPF0607 protein ENSP00000383783 from Homo sapiens (Human).